A 417-amino-acid polypeptide reads, in one-letter code: Caveolae-associated protein 2 (417 aa).

The tract at residues 1–42 is disordered; the sequence is MGEDAAQAEKFQHPNTDMLQEKPSNPSPMPSSTPSPSLNLGS. Residue G2 is modified to N-acetylglycine. An interaction with CAVIN1 region spans residues 2 to 168; the sequence is GEDAAQAEKF…IFQEESEIPA (167 aa). Residues S27, S35, S37, and S51 each carry the phosphoserine modification. Coiled coils occupy residues 61-87 and 126-267; these read LLDK…INLE and RAVR…VERR. The interval 62–100 is leucine-zipper; the sequence is LDKLVNMLDAVRENQHNMEQRQINLEGSVKGIQNDLTKL. Residue T195 is modified to Phosphothreonine. Disordered regions lie at residues 198–242 and 256–381; these read NVDL…DSLK and KLGT…ALQQ. Residues S202, S203, and S217 each carry the phosphoserine modification. A compositionally biased stretch (acidic residues) spans 202 to 218; the sequence is SSDDELPGDEEALEDSA. Positions 219–242 are enriched in basic and acidic residues; sequence EEKMEESRAEKIKRSSLKKVDSLK. The span at 274–286 shows a compositional bias: polar residues; the sequence is LTPNHQKASSGKS. A phosphoserine mark is found at S282, S283, S286, S287, S292, and S295. Positions 302-320 are enriched in basic and acidic residues; the sequence is REGESSAENETKLEEQVQD. Phosphoserine occurs at positions 326, 335, 358, and 362. Residues 354 to 365 are compositionally biased toward polar residues; the sequence is RGNNSGVGSNAD. The residue at position 367 (T367) is a Phosphothreonine. The segment covering 367-376 has biased composition (acidic residues); the sequence is TIEEDEEEES. At Y387 the chain carries Phosphotyrosine. Residues S389 and S395 each carry the phosphoserine modification.

Belongs to the CAVIN family. In terms of assembly, component of the CAVIN complex composed of CAVIN1, CAVIN2, CAVIN3 and CAVIN. Interacts with CAVIN4; this augments the transactivation of NPPA by CAVIN4. Binds to PRKCA in the presence of phosphatidylserine. Interacts with CAVIN1 and CAV3. Post-translationally, the N-terminus is blocked. In terms of processing, phosphorylated on Ser residues.

Its subcellular location is the cytoplasm. It localises to the cytosol. The protein localises to the membrane. It is found in the caveola. Functionally, plays an important role in caveolar biogenesis and morphology. Regulates caveolae morphology by inducing membrane curvature within caveolae. Plays a role in caveola formation in a tissue-specific manner. Required for the formation of caveolae in the lung and fat endothelia but not in the heart endothelia. Negatively regulates the size or stability of CAVIN complexes in the lung endothelial cells. May play a role in targeting PRKCA to caveolae. The chain is Caveolae-associated protein 2 from Rattus norvegicus (Rat).